The sequence spans 310 residues: Methionyl-tRNA formyltransferase (310 aa).

109-112 (SLLP) is a binding site for (6S)-5,6,7,8-tetrahydrofolate.

It belongs to the Fmt family.

The catalysed reaction is L-methionyl-tRNA(fMet) + (6R)-10-formyltetrahydrofolate = N-formyl-L-methionyl-tRNA(fMet) + (6S)-5,6,7,8-tetrahydrofolate + H(+). Functionally, attaches a formyl group to the free amino group of methionyl-tRNA(fMet). The formyl group appears to play a dual role in the initiator identity of N-formylmethionyl-tRNA by promoting its recognition by IF2 and preventing the misappropriation of this tRNA by the elongation apparatus. This chain is Methionyl-tRNA formyltransferase, found in Pseudomonas putida (strain W619).